We begin with the raw amino-acid sequence, 611 residues long: Oxidoreductase cicC (611 aa).

The signal sequence occupies residues methionine 1–alanine 20. Residues asparagine 45–alanine 46 and glutamate 65–alanine 66 contribute to the FAD site. Residues asparagine 76 and asparagine 113 are each glycosylated (N-linked (GlcNAc...) asparagine). FAD-binding positions include valine 123 and asparagine 131–threonine 134. 3 N-linked (GlcNAc...) asparagine glycosylation sites follow: asparagine 282, asparagine 410, and asparagine 475. The active-site Proton acceptor is histidine 547. Histidine 547 serves as the catalytic Proton donor. Alanine 581 provides a ligand contact to FAD. Residue histidine 591 is the Proton acceptor of the active site. Proline 592–isoleucine 593 lines the FAD pocket.

This sequence belongs to the GMC oxidoreductase family. FAD serves as cofactor.

It participates in phytotoxin biosynthesis. In terms of biological role, oxidoreductase; part of the gene cluster that mediates the biosynthesis of cichorine, a phytotoxin active against knapweed, corn, and soybeans. The first step in the pathway is performed by the non-reducing polyketide synthase pkbA that condenses one acetyl-CoA starter unit with 3 malonyl-CoA units. PkbA also catalyzes one methylation step to produce 3-methylorsellinate. The nonribosomal peptide synthase-like protein cicB, the cytochrome P450 monooxygenase cicH and the O-methyltransferase cicE are involved in the conversion of 3-methylorsellinate into nidulol. CicB converts 3-methylorsellinate to a yet unidentified intermediate, cicH may play a ring-closing role for cichorine and cicE is plausibly responsible for the methylation of one of the phenol groups. The oxidoreductase cicC acts downstream with still unidentified enzymes to further convert nidulol into cichorine. This is Oxidoreductase cicC from Emericella nidulans (strain FGSC A4 / ATCC 38163 / CBS 112.46 / NRRL 194 / M139) (Aspergillus nidulans).